The primary structure comprises 436 residues: GTPase Der (436 aa).

2 consecutive EngA-type G domains span residues 4-167 and 175-351; these read PTVA…PVEE and IRFS…ESQN. Residues 10 to 17, 57 to 61, 119 to 122, 181 to 188, 229 to 233, and 294 to 297 each bind GTP; these read GRPNVGKS, DTGGI, NKVD, DTAGM, and NKWD. The KH-like domain maps to 352 to 436; sequence KRIPSAVLND…PINLIARKRK (85 aa).

The protein belongs to the TRAFAC class TrmE-Era-EngA-EngB-Septin-like GTPase superfamily. EngA (Der) GTPase family. In terms of assembly, associates with the 50S ribosomal subunit.

GTPase that plays an essential role in the late steps of ribosome biogenesis. This is GTPase Der from Streptococcus agalactiae serotype III (strain NEM316).